The following is a 62-amino-acid chain: Photosystem II reaction center protein Z (62 aa).

The next 2 membrane-spanning stretches (helical) occupy residues 8 to 28 (AVFA…VVFA) and 41 to 61 (FSGT…NSLI).

Belongs to the PsbZ family. In terms of assembly, PSII is composed of 1 copy each of membrane proteins PsbA, PsbB, PsbC, PsbD, PsbE, PsbF, PsbH, PsbI, PsbJ, PsbK, PsbL, PsbM, PsbT, PsbY, PsbZ, Psb30/Ycf12, at least 3 peripheral proteins of the oxygen-evolving complex and a large number of cofactors. It forms dimeric complexes.

It localises to the plastid. It is found in the chloroplast thylakoid membrane. In terms of biological role, may control the interaction of photosystem II (PSII) cores with the light-harvesting antenna, regulates electron flow through the 2 photosystem reaction centers. PSII is a light-driven water plastoquinone oxidoreductase, using light energy to abstract electrons from H(2)O, generating a proton gradient subsequently used for ATP formation. In Oenothera elata subsp. hookeri (Hooker's evening primrose), this protein is Photosystem II reaction center protein Z.